The sequence spans 250 residues: Large ribosomal subunit protein uL29m (250 aa).

The residue at position 144 (Lys-144) is an N6-acetyllysine.

This sequence belongs to the universal ribosomal protein uL29 family. In terms of assembly, component of the mitochondrial large ribosomal subunit (mt-LSU). Mature mammalian 55S mitochondrial ribosomes consist of a small (28S) and a large (39S) subunit. The 28S small subunit contains a 12S ribosomal RNA (12S mt-rRNA) and 30 different proteins. The 39S large subunit contains a 16S rRNA (16S mt-rRNA), a copy of mitochondrial valine transfer RNA (mt-tRNA(Val)), which plays an integral structural role, and 52 different proteins.

Its subcellular location is the mitochondrion. This is Large ribosomal subunit protein uL29m (MRPL47) from Homo sapiens (Human).